The sequence spans 1192 residues: DNA topoisomerase 2 (1192 aa).

ATP-binding positions include Asn64, Asn95, and 142–149; that span reads GTNGVGLK. Mg(2+)-binding residues include Glu438, Asp539, and Asp541. Residues 707-1174 form the Topo IIA-type catalytic domain; sequence IPNFLDGMTR…PGASVWLEEI (468 aa). The active-site O-(5'-phospho-DNA)-tyrosine intermediate is the Tyr800.

This sequence belongs to the type II topoisomerase family. Mg(2+) serves as cofactor. Mn(2+) is required as a cofactor. Requires Ca(2+) as cofactor.

It is found in the host cytoplasm. It catalyses the reaction ATP-dependent breakage, passage and rejoining of double-stranded DNA.. Functionally, type II topoisomerase. Processively relaxes supercoiled DNA. Displays DNA-supercoiling activity only when associated with the viral histone-like protein. This African swine fever virus (isolate Pig/Kenya/KEN-50/1950) (ASFV) protein is DNA topoisomerase 2.